An 824-amino-acid chain; its full sequence is Glycerol-3-phosphate acyltransferase (824 aa).

The HXXXXD motif motif lies at 302–307 (CHRSHM).

The protein belongs to the GPAT/DAPAT family.

It localises to the cell inner membrane. The enzyme catalyses sn-glycerol 3-phosphate + an acyl-CoA = a 1-acyl-sn-glycero-3-phosphate + CoA. Its pathway is phospholipid metabolism; CDP-diacylglycerol biosynthesis; CDP-diacylglycerol from sn-glycerol 3-phosphate: step 1/3. The protein is Glycerol-3-phosphate acyltransferase of Actinobacillus pleuropneumoniae serotype 3 (strain JL03).